Consider the following 105-residue polypeptide: Vacuolar ATPase assembly integral membrane protein VMA21 homolog (105 aa).

The interval 1-26 (MSTKNKKAAGGNGGAPKQTRQQSHDS) is disordered. Residues 1–36 (MSTKNKKAAGGNGGAPKQTRQQSHDSQDYSSFKTVL) are Cytoplasmic-facing. Residues 37 to 57 (FYCMLIVFLPVLTFFVLKGFV) form a helical membrane-spanning segment. Residues 58–68 (LDQFLDISEVK) are Lumenal-facing. A helical transmembrane segment spans residues 69–89 (VNIASAVGAVVALHIALGLYI). The Cytoplasmic segment spans residues 90 to 105 (YRAYFGTTGSKASKTD).

It belongs to the VMA21 family.

The protein localises to the endoplasmic reticulum membrane. The protein resides in the endoplasmic reticulum-Golgi intermediate compartment membrane. It is found in the cytoplasmic vesicle. It localises to the COPII-coated vesicle membrane. Functionally, required for the assembly of the V0 complex of the vacuolar ATPase (V-ATPase) in the endoplasmic reticulum. The chain is Vacuolar ATPase assembly integral membrane protein VMA21 homolog from Drosophila erecta (Fruit fly).